Here is a 354-residue protein sequence, read N- to C-terminus: MTELKNDRYLRALLRQPVDVTPVWMMRQAGRYLPEYKATRAQAGDFMSLCKNAELACEVTLQPLRRYPLDAAILFSDILTVPDAMELGLYFEAGEGPRFTAPVTCKADVDKLPIPDPEDELGYVMNAVRTIRRELKGEVPLIGFSGSPWTLATYMVEGGSSKAFTVIKKMMYADPQALHLLLDKLAKSVTLYLNAQIKAGAQSVMIFDTWGGVLTGRDYQHFSLYYMHKIVDGLLRENDGRRVPVTLFTKGGGQWLEAMAETGCDALGLDWTTDIADARRRVGHKVALQGNMDPSMLYAPPARIEDEVATILSGFGQGEGHVFNLGHGIHQDVPPEHAGVFVEAVHRLSAQYHN.

Substrate-binding positions include 27–31 (RQAGR), Asp77, Tyr154, Thr209, and His327.

The protein belongs to the uroporphyrinogen decarboxylase family. In terms of assembly, homodimer.

It is found in the cytoplasm. The catalysed reaction is uroporphyrinogen III + 4 H(+) = coproporphyrinogen III + 4 CO2. It functions in the pathway porphyrin-containing compound metabolism; protoporphyrin-IX biosynthesis; coproporphyrinogen-III from 5-aminolevulinate: step 4/4. Catalyzes the decarboxylation of four acetate groups of uroporphyrinogen-III to yield coproporphyrinogen-III. The chain is Uroporphyrinogen decarboxylase from Salmonella arizonae (strain ATCC BAA-731 / CDC346-86 / RSK2980).